A 336-amino-acid polypeptide reads, in one-letter code: Glyceraldehyde-3-phosphate dehydrogenase, chromosomal (336 aa).

NAD(+) is bound by residues 12–13 (RI), Asp37, Arg81, and Ser123. D-glyceraldehyde 3-phosphate is bound by residues 154–156 (SCT) and Thr185. Cys155 functions as the Nucleophile in the catalytic mechanism. Asn186 serves as a coordination point for NAD(+). D-glyceraldehyde 3-phosphate is bound by residues Arg200, 213 to 214 (TG), and Arg236. Asn317 serves as a coordination point for NAD(+).

Belongs to the glyceraldehyde-3-phosphate dehydrogenase family. In terms of assembly, homotetramer.

It catalyses the reaction D-glyceraldehyde 3-phosphate + phosphate + NAD(+) = (2R)-3-phospho-glyceroyl phosphate + NADH + H(+). It functions in the pathway carbohydrate biosynthesis; Calvin cycle. In terms of biological role, could be involved in carbon fixation as a component of the Calvin cycle. Catalyzes the oxidative phosphorylation of glyceraldehyde 3-phosphate (G3P) to 1,3-bisphosphoglycerate (BPG) using the cofactor NAD. The first reaction step involves the formation of a hemiacetal intermediate between G3P and a cysteine residue, and this hemiacetal intermediate is then oxidized to a thioester, with concomitant reduction of NAD to NADH. The reduced NADH is then exchanged with the second NAD, and the thioester is attacked by a nucleophilic inorganic phosphate to produce BPG. This chain is Glyceraldehyde-3-phosphate dehydrogenase, chromosomal (cbbGC), found in Cupriavidus necator (strain ATCC 17699 / DSM 428 / KCTC 22496 / NCIMB 10442 / H16 / Stanier 337) (Ralstonia eutropha).